The chain runs to 171 residues: Lipoprotein signal peptidase (171 aa).

Transmembrane regions (helical) follow at residues 8–28, 64–84, and 99–119; these read SFLWLSAVAFVVDLLTKYIVV, WQQYFFILLALAISGMLVYFL, and ALIIGGALANMVDRAYNGFVV. Active-site residues include D120 and D138. Residues 133-153 traverse the membrane as a helical segment; that stretch reads VFNIADIAICIGAGLLALDAF.

Belongs to the peptidase A8 family.

Its subcellular location is the cell inner membrane. The catalysed reaction is Release of signal peptides from bacterial membrane prolipoproteins. Hydrolyzes -Xaa-Yaa-Zaa-|-(S,diacylglyceryl)Cys-, in which Xaa is hydrophobic (preferably Leu), and Yaa (Ala or Ser) and Zaa (Gly or Ala) have small, neutral side chains.. It participates in protein modification; lipoprotein biosynthesis (signal peptide cleavage). Its function is as follows. This protein specifically catalyzes the removal of signal peptides from prolipoproteins. The sequence is that of Lipoprotein signal peptidase from Haemophilus influenzae (strain PittGG).